The following is a 137-amino-acid chain: Small ribosomal subunit protein uS11 (137 aa).

Residues 116 to 137 (EDVTPVPSDSTRKKGGRRGRRL) form a disordered region. Residues 128-137 (KKGGRRGRRL) show a composition bias toward basic residues.

Belongs to the universal ribosomal protein uS11 family.

This Kluyveromyces lactis (strain ATCC 8585 / CBS 2359 / DSM 70799 / NBRC 1267 / NRRL Y-1140 / WM37) (Yeast) protein is Small ribosomal subunit protein uS11 (RPS14).